The sequence spans 327 residues: Dolichyl-phosphate beta-glucosyltransferase (327 aa).

Residues 1-15 (MIDLFINIASFTIYG) are Lumenal-facing. Residues 16-36 (IPVIPLFIIVFVILSYYLLLL) traverse the membrane as a helical segment. The Cytoplasmic segment spans residues 37–327 (HDESPLWLEK…YLLGIWKIKS (291 aa)).

Belongs to the glycosyltransferase 2 family.

The protein localises to the endoplasmic reticulum membrane. It carries out the reaction a di-trans,poly-cis-dolichyl phosphate + UDP-alpha-D-glucose = a di-trans,poly-cis-dolichyl beta-D-glucosyl phosphate + UDP. It functions in the pathway protein modification; protein glycosylation. Endoplasmic reticulum membrane-bound UDP-glucose:dolichyl-phosphate glucosyltransferase involved in protein N-linked glycosylation. The sequence is that of Dolichyl-phosphate beta-glucosyltransferase (alg5) from Dictyostelium discoideum (Social amoeba).